Consider the following 278-residue polypeptide: Large ribosomal subunit protein uL2 (278 aa).

The disordered stretch occupies residues 201–278; it reads HGNINDGKAG…IMRSRHQRKK (78 aa). A compositionally biased stretch (basic residues) spans 210-221; it reads GRSRWRGKRPHV.

This sequence belongs to the universal ribosomal protein uL2 family. Part of the 50S ribosomal subunit. Forms a bridge to the 30S subunit in the 70S ribosome.

One of the primary rRNA binding proteins. Required for association of the 30S and 50S subunits to form the 70S ribosome, for tRNA binding and peptide bond formation. It has been suggested to have peptidyltransferase activity; this is somewhat controversial. Makes several contacts with the 16S rRNA in the 70S ribosome. The chain is Large ribosomal subunit protein uL2 from Sinorhizobium fredii (strain NBRC 101917 / NGR234).